The sequence spans 189 residues: Ion-translocating oxidoreductase complex subunit B (189 aa).

The segment at 1–26 is hydrophobic; the sequence is MSGIFIAIILLTILALLFGILLGFAA. The 4Fe-4S domain maps to 32–90; it reads EGDPLVDQLEALLPQTQCGQCGYPGCRPYAEAIANGEKINLCPPGGSATMEKLAEMAGV. Residues C49, C52, C57, C73, C114, C117, C120, C124, C144, C147, C150, and C154 each coordinate [4Fe-4S] cluster. 2 consecutive 4Fe-4S ferredoxin-type domains span residues 105 to 134 and 135 to 164; these read KVAY…GSGK and LMHT…MLPV.

The protein belongs to the 4Fe4S bacterial-type ferredoxin family. RnfB subfamily. In terms of assembly, the complex is composed of six subunits: RnfA, RnfB, RnfC, RnfD, RnfE and RnfG. The cofactor is [4Fe-4S] cluster.

It is found in the cell inner membrane. In terms of biological role, part of a membrane-bound complex that couples electron transfer with translocation of ions across the membrane. This Shewanella sediminis (strain HAW-EB3) protein is Ion-translocating oxidoreductase complex subunit B.